We begin with the raw amino-acid sequence, 316 residues long: Olfactory receptor 1165 (316 aa).

Topologically, residues 1 to 28 (MMLDLGNESSVTMFILSGFSEYPHLHAP) are extracellular. N-linked (GlcNAc...) asparagine glycosylation occurs at Asn7. The helical transmembrane segment at 29 to 50 (LFLLFFMIYTVTLIGNLGIIVV) threads the bilayer. The Cytoplasmic portion of the chain corresponds to 51 to 61 (RKVNPKLHTPM). Residues 62–80 (YFFLSHLSFLDICYSSVFT) traverse the membrane as a helical segment. Over 81–99 (PKLLEILIVEDRTISFKGC) the chain is Extracellular. Cys99 and Cys181 form a disulfide bridge. Residues 100–122 (MTQFFLICAFVITEMFMLAVMAY) form a helical membrane-spanning segment. Topologically, residues 123–141 (DRFVAVCNPLLYTVSMSPK) are cytoplasmic. Residues 142 to 166 (LCAFLVAGTYMWGVLCSLTITYSLL) form a helical membrane-spanning segment. Residues 167 to 205 (QLSYCGPNIINHFGCEYSAILSLSCSDPTFSQVVCLTIS) lie on the Extracellular side of the membrane. A helical transmembrane segment spans residues 206–228 (IFNETCSLLIILASYVFIVVTII). At 229–239 (KMPSKGGLQKA) the chain is on the cytoplasmic side. A helical transmembrane segment spans residues 240-263 (FSTCSSHLTAISIFHGIILLLYCV). Topologically, residues 264–268 (PNSKN) are extracellular. Residues 269–291 (SWLVVKVATVLFTVMIPMLNPLI) form a helical membrane-spanning segment. Over 292–316 (YSLRNKDVKGTVSRLMHLKLQAHST) the chain is Cytoplasmic.

The protein belongs to the G-protein coupled receptor 1 family.

It localises to the cell membrane. In terms of biological role, olfactory receptor. This chain is Olfactory receptor 1165, found in Mus musculus (Mouse).